The chain runs to 103 residues: Small ribosomal subunit protein uS10 (103 aa).

Belongs to the universal ribosomal protein uS10 family. In terms of assembly, part of the 30S ribosomal subunit.

Functionally, involved in the binding of tRNA to the ribosomes. The sequence is that of Small ribosomal subunit protein uS10 from Buchnera aphidicola subsp. Cinara cedri (strain Cc).